A 142-amino-acid chain; its full sequence is Neurofilament heavy polypeptide (142 aa).

The IF rod domain maps to 1–142 (MRGAVLRLGA…EAAKVNTDAM (142 aa)). Positions 26–74 (IAHVRQRLDDEARQRQEAEAAARALARFAQEAEAARVELQKKAQALQEE) form a coiled coil.

This sequence belongs to the intermediate filament family. In terms of assembly, forms heterodimers with NEFL; which can further hetero-oligomerize (in vitro). Forms heterodimers with INA (in vitro). There are a number of repeats of the tripeptide K-S-P, NFH is phosphorylated on a number of the serines in this motif. It is thought that phosphorylation of NFH results in the formation of interfilament cross bridges that are important in the maintenance of axonal caliber. In terms of processing, phosphorylation seems to play a major role in the functioning of the larger neurofilament polypeptides (NF-M and NF-H), the levels of phosphorylation being altered developmentally and coincidentally with a change in the neurofilament function. Post-translationally, phosphorylated in the head and rod regions by the PKC kinase PKN1, leading to the inhibition of polymerization.

The protein localises to the cytoplasm. It is found in the cytoskeleton. The protein resides in the cell projection. Its subcellular location is the axon. Neurofilaments usually contain three intermediate filament proteins: NEFL, NEFM, and NEFH which are involved in the maintenance of neuronal caliber. NEFH has an important function in mature axons that is not subserved by the two smaller NF proteins. May additionally cooperate with the neuronal intermediate filament proteins PRPH and INA to form neuronal filamentous networks. This chain is Neurofilament heavy polypeptide (NEFH), found in Sus scrofa (Pig).